A 215-amino-acid polypeptide reads, in one-letter code: Nitrate/nitrite response regulator protein NarP (215 aa).

Residues 8 to 124 enclose the Response regulatory domain; the sequence is QVMIVDDHPL…VLLEAIRAGA (117 aa). D59 carries the post-translational modification 4-aspartylphosphate. In terms of domain architecture, HTH luxR-type spans 147–212; it reads EEDPFSVLTE…AATILFLQQR (66 aa). Residues 171–190 constitute a DNA-binding region (H-T-H motif); the sequence is NKQIASVLNISEQTVKVHIR.

Functionally, this protein activates the expression of the nitrate reductase (narGHJI) and formate dehydrogenase-N (fdnGHI) operons and represses the transcription of the fumarate reductase (frdABCD) operon in response to a nitrate/nitrite induction signal transmitted by either the NarX or NarQ proteins. This is Nitrate/nitrite response regulator protein NarP (narP) from Escherichia coli (strain K12).